Reading from the N-terminus, the 63-residue chain is Large ribosomal subunit protein uL30 (63 aa).

It belongs to the universal ribosomal protein uL30 family. As to quaternary structure, part of the 50S ribosomal subunit.

This is Large ribosomal subunit protein uL30 from Methylobacterium sp. (strain 4-46).